The chain runs to 293 residues: NAD kinase (293 aa).

D72 acts as the Proton acceptor in catalysis. NAD(+)-binding positions include 72–73 (DG), 146–147 (ND), R157, R174, D176, 187–192 (TAYALS), and Q247.

The protein belongs to the NAD kinase family. Requires a divalent metal cation as cofactor.

It is found in the cytoplasm. It catalyses the reaction NAD(+) + ATP = ADP + NADP(+) + H(+). Functionally, involved in the regulation of the intracellular balance of NAD and NADP, and is a key enzyme in the biosynthesis of NADP. Catalyzes specifically the phosphorylation on 2'-hydroxyl of the adenosine moiety of NAD to yield NADP. This Chromohalobacter salexigens (strain ATCC BAA-138 / DSM 3043 / CIP 106854 / NCIMB 13768 / 1H11) protein is NAD kinase.